Consider the following 238-residue polypeptide: Ribose-5-phosphate isomerase A (238 aa).

Residues 30–33, 87–90, and 100–103 each bind substrate; these read SGST, DGAD, and KGGG. Residue glutamate 109 is the Proton acceptor of the active site. Residue lysine 127 coordinates substrate.

It belongs to the ribose 5-phosphate isomerase family. Homodimer.

The enzyme catalyses aldehydo-D-ribose 5-phosphate = D-ribulose 5-phosphate. It participates in carbohydrate degradation; pentose phosphate pathway; D-ribose 5-phosphate from D-ribulose 5-phosphate (non-oxidative stage): step 1/1. Its function is as follows. Catalyzes the reversible conversion of ribose-5-phosphate to ribulose 5-phosphate. The chain is Ribose-5-phosphate isomerase A from Synechococcus sp. (strain CC9311).